We begin with the raw amino-acid sequence, 75 residues long: Translation initiation factor IF-1, chloroplastic (75 aa).

It belongs to the IF-1 family. Component of the 30S ribosomal translation pre-initiation complex which assembles on the 30S ribosome in the order IF-2 and IF-3, IF-1 and N-formylmethionyl-tRNA(fMet); mRNA recruitment can occur at any time during PIC assembly.

Its subcellular location is the plastid. The protein resides in the chloroplast. Functionally, one of the essential components for the initiation of protein synthesis. Stabilizes the binding of IF-2 and IF-3 on the 30S subunit to which N-formylmethionyl-tRNA(fMet) subsequently binds. Helps modulate mRNA selection, yielding the 30S pre-initiation complex (PIC). Upon addition of the 50S ribosomal subunit IF-1, IF-2 and IF-3 are released leaving the mature 70S translation initiation complex. This is Translation initiation factor IF-1, chloroplastic (infA) from Cucumis sativus (Cucumber).